We begin with the raw amino-acid sequence, 301 residues long: Glutamyl-Q tRNA(Asp) synthetase (301 aa).

L-glutamate-binding positions include 9-13 and Glu-45; that span reads RFAPS. The 'HIGH' region signature appears at 12–22; it reads PSPTGPLHLGS. Residues Cys-101, Cys-103, Tyr-121, and Cys-125 each coordinate Zn(2+). L-glutamate contacts are provided by Tyr-179 and Arg-197. The 'KMSKS' region motif lies at 235–239; sequence KLSKQ. Lys-238 contacts ATP.

Belongs to the class-I aminoacyl-tRNA synthetase family. GluQ subfamily. It depends on Zn(2+) as a cofactor.

Catalyzes the tRNA-independent activation of glutamate in presence of ATP and the subsequent transfer of glutamate onto a tRNA(Asp). Glutamate is transferred on the 2-amino-5-(4,5-dihydroxy-2-cyclopenten-1-yl) moiety of the queuosine in the wobble position of the QUC anticodon. This is Glutamyl-Q tRNA(Asp) synthetase from Thiobacillus denitrificans (strain ATCC 25259 / T1).